Here is a 320-residue protein sequence, read N- to C-terminus: MPASLLELKKKIASVKQTGKITEAMRMVSASKLNQTEDRDKGYTIYNNHVRKTISRLISSQVVDSLREQDVAIDKRNIAKIDYTDVFGLGITADMIQPRKNIKSTGFLVVSGDRGLVGSYNSNVIKNMMGIFEDERAQGHDVKVLAVGSVGAQFFKKNNVNVVYEKNGVSDVPTFDEVLPIVSTAIKMFLNGVFDQLYVCYTHHVNSLSSAFRVEKMLPIVDLDIGVKEAEAHRELEYDIEPDPNRVLMKLLPQYARSTIYGAILDAKTAEHASSMTAMQSATDNAKDLVSNLTTKLNRARQAQITTEITEIISGANALE.

Belongs to the ATPase gamma chain family. As to quaternary structure, F-type ATPases have 2 components, CF(1) - the catalytic core - and CF(0) - the membrane proton channel. CF(1) has five subunits: alpha(3), beta(3), gamma(1), delta(1), epsilon(1). CF(0) has three main subunits: a, b and c.

The protein localises to the cell membrane. Produces ATP from ADP in the presence of a proton gradient across the membrane. The gamma chain is believed to be important in regulating ATPase activity and the flow of protons through the CF(0) complex. This chain is ATP synthase gamma chain, found in Lactobacillus helveticus (strain DPC 4571).